A 125-amino-acid chain; its full sequence is Testis-specific protein LINC02914 (125 aa).

Over residues 1-12 (MHRKEPGARLEA) the composition is skewed to basic and acidic residues. The interval 1–45 (MHRKEPGARLEATRGAARPHKQGTKPMITRPSVSQLGEGKCPSSQ) is disordered.

As to expression, expressed in testes and ejaculated spermatozoa (at protein level).

It is found in the cytoplasm. The protein localises to the nucleus. Its subcellular location is the cell projection. It localises to the cilium. The protein resides in the flagellum. Functionally, may play a role in the flagellum biology. This Homo sapiens (Human) protein is Testis-specific protein LINC02914.